We begin with the raw amino-acid sequence, 173 residues long: Ribulose bisphosphate carboxylase small subunit, chloroplastic 7 (173 aa).

Residues 1–49 (MASIPATVATVAQANMVAPFTGLKSNAAFPVTKKVNDFSTLASNGGRVQ) constitute a chloroplast transit peptide.

The protein belongs to the RuBisCO small chain family. Heterohexadecamer of 8 large and 8 small subunits.

The protein resides in the plastid. Its subcellular location is the chloroplast. Its function is as follows. RuBisCO catalyzes two reactions: the carboxylation of D-ribulose 1,5-bisphosphate, the primary event in carbon dioxide fixation, as well as the oxidative fragmentation of the pentose substrate. Both reactions occur simultaneously and in competition at the same active site. Although the small subunit is not catalytic it is essential for maximal activity. In Flaveria pringlei, this protein is Ribulose bisphosphate carboxylase small subunit, chloroplastic 7.